The sequence spans 276 residues: MVESDEDFAPQEFPHTDTDVIVNEHRDENDGYASDEVGGTLSRRASSIFSINTTPLAPPNATDIQKFTSDEHHFSMMRNLHMADYITMLNGFSGFYSIVSCLRFTLTGKPHYVQRAHFFILLGMCFDFLDGRVARLRNRSSLMGQELDSLADLVSFGVAPAAIAFAIGFQTTFDVMILSFFVLCGLARLARFNVTVAQLPKDSSTGKSKYFEGLPMPTTLALVLGMAYCVRKGLIFDNIPFGIFREDQILEFHPIILVFFIHGCGMISKSLKIPKP.

The segment at 1–21 (MVESDEDFAPQEFPHTDTDVI) is disordered. Phosphoserine occurs at positions 4, 34, 42, 46, 47, and 50. 4 consecutive transmembrane segments (helical) span residues 82–102 (MADY…VSCL), 163–183 (IAFA…FFVL), 210–230 (YFEG…AYCV), and 248–268 (QILE…GMIS).

The protein belongs to the CDP-alcohol phosphatidyltransferase class-I family. Mn(2+) is required as a cofactor. Mg(2+) serves as cofactor.

The protein resides in the microsome membrane. Its subcellular location is the endoplasmic reticulum membrane. It localises to the mitochondrion outer membrane. The catalysed reaction is a CDP-1,2-diacyl-sn-glycerol + L-serine = a 1,2-diacyl-sn-glycero-3-phospho-L-serine + CMP + H(+). It functions in the pathway phospholipid metabolism; phosphatidylethanolamine biosynthesis; phosphatidylethanolamine from CDP-diacylglycerol: step 1/2. In terms of biological role, catalyzes the synthesis of phosphatidylserine (PtdSer). The sequence is that of CDP-diacylglycerol--serine O-phosphatidyltransferase (CHO1) from Saccharomyces cerevisiae (strain ATCC 204508 / S288c) (Baker's yeast).